The sequence spans 131 residues: D-ribose pyranase (131 aa).

Residue His20 is the Proton donor of the active site. Residues Asp28, His98, and 120–122 (YAN) each bind substrate.

This sequence belongs to the RbsD / FucU family. RbsD subfamily. As to quaternary structure, homodecamer.

The protein localises to the cytoplasm. The catalysed reaction is beta-D-ribopyranose = beta-D-ribofuranose. It participates in carbohydrate metabolism; D-ribose degradation; D-ribose 5-phosphate from beta-D-ribopyranose: step 1/2. Its function is as follows. Catalyzes the interconversion of beta-pyran and beta-furan forms of D-ribose. In Bacillus mycoides (strain KBAB4) (Bacillus weihenstephanensis), this protein is D-ribose pyranase.